Here is a 406-residue protein sequence, read N- to C-terminus: MALWIYVVPPLAGLVIGYFTNDIAIKMLFRPYRAYRIFGWRIPFTPGLIPQNQPRLAKQIAKTIMGSLLTPEELHNLARKLLRTERMQAGIRWLLGVALDRLQNPEQQQQTAQVLARILADLFNESLPRLVKVLARQETFLEGPINQLFDQVLLELRLNAEQARQLSEWILKQALPPKVLRQNLVDFLTDRNIEALDEEFRERATGSYWLVANLFGLKNALLRLRTYCLEEPEGAEAILEDLLKDINAPRRLTEILQNLSLQNLPVSAVRQLRRALRDGIQDYLRSQGPEVIKGLGESIDWEKVASLVLGRLRNSKALIASIDQISADLALILERYLERDLESLMMQVIPVLNLDQVIADKVNATSPAELEQAIQQIVRQELQAIVNLGGLLGFLVGCVQVLFLLR.

Helical transmembrane passes span M1–N21 and I385–L405.

It belongs to the UPF0754 family.

It is found in the cell inner membrane. This Synechococcus sp. (strain JA-3-3Ab) (Cyanobacteria bacterium Yellowstone A-Prime) protein is UPF0754 membrane protein CYA_0973.